The following is a 489-amino-acid chain: 3-octaprenyl-4-hydroxybenzoate carboxy-lyase (489 aa).

N172 contributes to the Mn(2+) binding site. Prenylated FMN is bound by residues 175–177 (IYR), 189–191 (RWL), and 194–195 (RG). E238 is a binding site for Mn(2+). D287 (proton donor) is an active-site residue.

It belongs to the UbiD family. Homohexamer. Prenylated FMN is required as a cofactor. The cofactor is Mn(2+).

It is found in the cell membrane. It catalyses the reaction a 4-hydroxy-3-(all-trans-polyprenyl)benzoate + H(+) = a 2-(all-trans-polyprenyl)phenol + CO2. The protein operates within cofactor biosynthesis; ubiquinone biosynthesis. Catalyzes the decarboxylation of 3-octaprenyl-4-hydroxy benzoate to 2-octaprenylphenol, an intermediate step in ubiquinone biosynthesis. The polypeptide is 3-octaprenyl-4-hydroxybenzoate carboxy-lyase (Tolumonas auensis (strain DSM 9187 / NBRC 110442 / TA 4)).